The chain runs to 672 residues: Putative per-hexamer repeat protein 5 (672 aa).

Gly residues-rich tracts occupy residues 141–161, 171–191, 215–233, 243–263, 273–295, 303–355, and 365–389; these read TGTGTGTGTGTGTGTGTGTGT, TDRGTGTGTGTGTGTGTGTGT, TGTGTGTGTGTGTGTGTDT, TDRGTGTGTGTGTGTGTGTGTGT, TGTG…GSGS, and TGTGTGTDTGTGTGTGTGTGTGSGS. 2 disordered regions span residues 141–193 and 213–672; these read TGTG…GTGT and TGTG…TGTA. Low complexity predominate over residues 390-424; the sequence is GTAKVTGTATTTATVTETGTAKVTGTDTGTAKVTG. Positions 425–469 are enriched in gly residues; the sequence is TGTGTGTGTGTGTGTGTGTGTGTGTGTGTGTGTGTGTGTGTGSGS. Low complexity predominate over residues 470-486; sequence GTAKVTGTDTGTAKVTG. A compositionally biased stretch (gly residues) spans 487–537; sequence TGTGTGTGTGTGTGTGTGTGTGTGSGSGSGSGSGSGSGTGTGTGLGSGSGS. Residues 538 to 552 are compositionally biased toward low complexity; the sequence is GTAKVTGTGTAKVTG. Residues 553-617 show a composition bias toward gly residues; that stretch reads TGTGTGTGTG…GTGTGTGTGT (65 aa). Positions 618 to 636 are enriched in low complexity; the sequence is GTSTVTVRGTGTGTATATG. Composition is skewed to gly residues over residues 637–653 and 663–672; these read TGTGTGTGTGTGTGTGT and RGTGTGTGTA.

The protein is Putative per-hexamer repeat protein 5 (Phxr5) of Mus musculus (Mouse).